The following is an 843-amino-acid chain: Envelope glycoprotein gp160 (843 aa).

Residues 1–31 form the signal peptide; that stretch reads MRATEIRKNYQHLWKGGTLLLGMLMICSAAE. The Extracellular segment spans residues 32-671; that stretch reads QLWVTVYYGV…ITKWLWYIKI (640 aa). An intrachain disulfide couples cysteine 53 to cysteine 73. N-linked (GlcNAc...) asparagine; by host glycans are attached at residues asparagine 87, asparagine 129, asparagine 135, asparagine 138, asparagine 154, asparagine 158, asparagine 184, asparagine 193, asparagine 230, asparagine 237, asparagine 258, asparagine 272, asparagine 285, asparagine 291, asparagine 297, asparagine 327, and asparagine 351. Cystine bridges form between cysteine 118/cysteine 201, cysteine 125/cysteine 192, cysteine 130/cysteine 155, cysteine 214/cysteine 243, and cysteine 224/cysteine 235. Residues 130-154 are V1; the sequence is CTDLRNATNTTSSSWETMEKGEIKN. The tract at residues 155–192 is V2; it reads CSFNITTSIRDKVQKEYALFYNLDVVPIDNASYRLISC. The V3 stretch occupies residues 292 to 325; that stretch reads CTRPNNNTRKSINIGPGRALYTTGEIIGDIRQAH. Cysteines 292 and 326 form a disulfide. The interval 359–369 is CD4-binding loop; it reads SSGGDPEIVTH. 2 cysteine pairs are disulfide-bonded: cysteine 373–cysteine 432 and cysteine 380–cysteine 405. Residues 380–405 are V4; sequence CNSTQLFTWNDTRKLNNTGRNITLPC. N-linked (GlcNAc...) asparagine; by host glycans are attached at residues asparagine 381, asparagine 389, asparagine 395, asparagine 400, asparagine 435, and asparagine 450. 2 V5 regions span residues 448–458 and 450–458; these read DTNGTEIFRPG and NGTEIFRPG. The tract at residues 499 to 519 is fusion peptide; it reads AVGLGALFLGFLGAAGSTMGA. Residues 561–579 form an immunosuppression region; that stretch reads KQLQARVLAVERYLRDQQL. A disulfide bridge connects residues cysteine 585 and cysteine 591. Asparagine 598, asparagine 603, asparagine 612, and asparagine 624 each carry an N-linked (GlcNAc...) asparagine; by host glycan. Residues 620 to 654 adopt a coiled-coil conformation; it reads REIDNYTHIIYSLIEQSQNQQEKNEQELLALDKWA. Positions 649-670 are MPER; binding to GalCer; it reads ALDKWASLWNWFDITKWLWYIK. The chain crosses the membrane as a helical span at residues 672 to 692; it reads FIMIVGGLIGLRIVFVVLSIV. Residues 693–843 lie on the Cytoplasmic side of the membrane; it reads NRVRQGYSPL…IRQGLERALL (151 aa). The YXXL motif; contains endocytosis signal motif lies at 699–702; it reads YSPL. A disordered region spans residues 706–731; that stretch reads THLPAQRGPDRPDGIEEEGGERDRDR. Residue cysteine 751 is the site of S-palmitoyl cysteine; by host attachment. The Di-leucine internalization motif signature appears at 842–843; sequence LL.

It belongs to the HIV-1 env protein family. As to quaternary structure, the mature envelope protein (Env) consists of a homotrimer of non-covalently associated gp120-gp41 heterodimers. The resulting complex protrudes from the virus surface as a spike. There seems to be as few as 10 spikes on the average virion. Interacts with host CD4, CCR5 and CXCR4. Gp120 also interacts with the C-type lectins CD209/DC-SIGN and CLEC4M/DC-SIGNR (collectively referred to as DC-SIGN(R)). Gp120 and gp41 interact with GalCer. Gp120 interacts with host ITGA4/ITGB7 complex; on CD4+ T-cells, this interaction results in rapid activation of integrin ITGAL/LFA-1, which facilitates efficient cell-to-cell spreading of HIV-1. Gp120 interacts with cell-associated heparan sulfate; this interaction increases virus infectivity on permissive cells and may be involved in infection of CD4- cells. The mature envelope protein (Env) consists of a homotrimer of non-covalently associated gp120-gp41 heterodimers. The resulting complex protrudes from the virus surface as a spike. There seems to be as few as 10 spikes on the average virion. Post-translationally, highly glycosylated by host. The high number of glycan on the protein is reffered to as 'glycan shield' because it contributes to hide protein sequence from adaptive immune system. In terms of processing, palmitoylation of the transmembrane protein and of Env polyprotein (prior to its proteolytic cleavage) is essential for their association with host cell membrane lipid rafts. Palmitoylation is therefore required for envelope trafficking to classical lipid rafts, but not for viral replication. Specific enzymatic cleavages in vivo yield mature proteins. Envelope glycoproteins are synthesized as an inactive precursor that is heavily N-glycosylated and processed likely by host cell furin in the Golgi to yield the mature SU and TM proteins. The cleavage site between SU and TM requires the minimal sequence [KR]-X-[KR]-R. About 2 of the 9 disulfide bonds of gp41 are reduced by P4HB/PDI, following binding to CD4 receptor.

It localises to the virion membrane. The protein resides in the host cell membrane. The protein localises to the host endosome membrane. In terms of biological role, oligomerizes in the host endoplasmic reticulum into predominantly trimers. In a second time, gp160 transits in the host Golgi, where glycosylation is completed. The precursor is then proteolytically cleaved in the trans-Golgi and thereby activated by cellular furin or furin-like proteases to produce gp120 and gp41. Its function is as follows. Attaches the virus to the host lymphoid cell by binding to the primary receptor CD4. This interaction induces a structural rearrangement creating a high affinity binding site for a chemokine coreceptor like CXCR4 and/or CCR5. Acts as a ligand for CD209/DC-SIGN and CLEC4M/DC-SIGNR, which are respectively found on dendritic cells (DCs), and on endothelial cells of liver sinusoids and lymph node sinuses. These interactions allow capture of viral particles at mucosal surfaces by these cells and subsequent transmission to permissive cells. HIV subverts the migration properties of dendritic cells to gain access to CD4+ T-cells in lymph nodes. Virus transmission to permissive T-cells occurs either in trans (without DCs infection, through viral capture and transmission), or in cis (following DCs productive infection, through the usual CD4-gp120 interaction), thereby inducing a robust infection. In trans infection, bound virions remain infectious over days and it is proposed that they are not degraded, but protected in non-lysosomal acidic organelles within the DCs close to the cell membrane thus contributing to the viral infectious potential during DCs' migration from the periphery to the lymphoid tissues. On arrival at lymphoid tissues, intact virions recycle back to DCs' cell surface allowing virus transmission to CD4+ T-cells. Acts as a class I viral fusion protein. Under the current model, the protein has at least 3 conformational states: pre-fusion native state, pre-hairpin intermediate state, and post-fusion hairpin state. During fusion of viral and target intracellular membranes, the coiled coil regions (heptad repeats) assume a trimer-of-hairpins structure, positioning the fusion peptide in close proximity to the C-terminal region of the ectodomain. The formation of this structure appears to drive apposition and subsequent fusion of viral and target cell membranes. Complete fusion occurs in host cell endosomes and is dynamin-dependent, however some lipid transfer might occur at the plasma membrane. The virus undergoes clathrin-dependent internalization long before endosomal fusion, thus minimizing the surface exposure of conserved viral epitopes during fusion and reducing the efficacy of inhibitors targeting these epitopes. Membranes fusion leads to delivery of the nucleocapsid into the cytoplasm. The polypeptide is Envelope glycoprotein gp160 (Homo sapiens (Human)).